The chain runs to 662 residues: Intracellular exo-alpha-(1-&gt;5)-L-arabinofuranosidase (662 aa).

Residues glutamate 27, asparagine 72, and asparagine 174 each contribute to the alpha-L-arabinofuranose site. Glutamate 175 functions as the Proton donor/acceptor in the catalytic mechanism. Residues tyrosine 246, glutamate 294, and glutamine 352 each coordinate alpha-L-arabinofuranose. Residue glutamate 294 is the Nucleophile of the active site. Disordered regions lie at residues 454 to 483 (LADA…SLRD), 497 to 548 (SIRC…RTAR), and 588 to 662 (WTRW…ARRC). A compositionally biased stretch (low complexity) spans 519–533 (TGTPPAAPPSSSSAP). The span at 537-547 (PTARRSPDRTA) shows a compositional bias: basic and acidic residues. Low complexity-rich tracts occupy residues 590-603 (RWAP…PSRR), 628-641 (RRSP…TPAP), and 649-662 (AGAS…ARRC).

The protein belongs to the glycosyl hydrolase 51 family. Homohexamer; trimer of dimers.

It localises to the cytoplasm. The enzyme catalyses Hydrolysis of terminal non-reducing alpha-L-arabinofuranoside residues in alpha-L-arabinosides.. Its pathway is glycan metabolism; L-arabinan degradation. Functionally, involved in the degradation of arabinan and is a key enzyme in the complete degradation of the plant cell wall. Catalyzes the cleavage of terminal alpha-(1-&gt;5)-arabinofuranosyl bonds in different hemicellulosic homopolysaccharides (arabino-oligoxylosides, branched and debranched arabinans). It acts rapidly on the short-chain arabino-oligoxylosides from digestion of xylan with xylanases. It hydrolyzes slowly arabinan and arabinoxylan from wheat and rye flour. The sequence is that of Intracellular exo-alpha-(1-&gt;5)-L-arabinofuranosidase from Streptomyces lividans.